The sequence spans 476 residues: Sulfite exporter TauE/SafE family protein 3 (476 aa).

12 consecutive transmembrane segments (helical) span residues 8–28, 76–92, 99–115, 120–142, 151–171, 172–192, 257–277, 291–311, 339–359, 360–380, 397–417, and 433–453; these read WLGLRSVTIFLINFSLAFAFV, FNWQIVLGTLVGFFGAA, VGGGGIFVPMLSLIIGF, ATAISKCMIMGASVSTVYYNLRL, IIDYDLALLIQPMLMLGISIG, VAFNVIFPDWLVTVLLIVLFL, VYWKELGLLVFVWIVFLALQI, VINLLQIPVAVGVSGYEAVAL, FGIIAGIVGGLLGLGGGFIMG, PLFLELGVPPQVSSATATFAM, FPVPYALYLVGVATIAAWVGQ, and IIFILASMIFISAISLGGVGI.

This sequence belongs to the 4-toluene sulfonate uptake permease (TSUP) (TC 2.A.102) family.

The protein localises to the membrane. This is Sulfite exporter TauE/SafE family protein 3 from Arabidopsis thaliana (Mouse-ear cress).